The following is a 645-amino-acid chain: Putative palmitoyltransferase ZDHHC13 (645 aa).

Positions 1 to 73 (MDWSEGDGSH…KSSHPEDSSS (73 aa)) are disordered. Topologically, residues 1–314 (MDWSEGDGSH…ACLKLLNRYK (314 aa)) are cytoplasmic. Basic and acidic residues predominate over residues 7-20 (DGSHSHGHMGDSCH). The span at 23 to 33 (GGGHSHGHGHS) shows a compositional bias: basic residues. Gly residues predominate over residues 34–43 (HGGSGFGGFM). 5 ANK repeats span residues 104 to 133 (ENVT…VIDQ), 138 to 167 (LNST…DPSL), 171 to 200 (EGYR…EVDL), 204 to 234 (NGQT…SVNA), and 239 to 268 (NRNS…SVDM). A helical transmembrane segment spans residues 315–335 (VCLQSVFSVVVVGAFGAILDM). Residue R336 is a topological domain, lumenal. Residues 337–357 (TESWLLKGILLACIMAVINLA) form a helical membrane-spanning segment. The Cytoplasmic segment spans residues 358-369 (SRQLATVAVRSL). Residues 370–390 (IPSTGLIASVFWMVVTWVLWF) traverse the membrane as a helical segment. Residues 391-394 (LPDE) lie on the Lumenal side of the membrane. The helical transmembrane segment at 395 to 415 (PSAAVQMLFTVNITAVLYYYI) threads the bilayer. Residues 416 to 492 (RSCRTDPGHV…NGCIGARNHP (77 aa)) are Cytoplasmic-facing. Residues 449-499 (IFCTSCMMRKPMRANHCFSCNACVAKQDHHSIWINGCIGARNHPFFVLFLV) enclose the DHHC domain. Residues 493–513 (FFVLFLVALNFLCIWMFYGSI) traverse the membrane as a helical segment. At 514 to 542 (TYWSRHCPLHYSEEGIWGALTALMGCSPW) the chain is on the lumenal side. A helical transmembrane segment spans residues 543–563 (LLYVFCFVFFHTTWASILLVL). The Cytoplasmic portion of the chain corresponds to 564–645 (QLYQIAFLGL…RDMFSSPDAV (82 aa)).

This sequence belongs to the DHHC palmitoyltransferase family. AKR/ZDHHC17 subfamily.

The protein resides in the golgi apparatus membrane. Its subcellular location is the cytoplasmic vesicle membrane. Functionally, putative palmitoyltransferase that could catalyze the addition of palmitate onto various protein substrates. The sequence is that of Putative palmitoyltransferase ZDHHC13 from Danio rerio (Zebrafish).